Consider the following 215-residue polypeptide: Octanoyltransferase (215 aa).

The BPL/LPL catalytic domain occupies 31–206; it reads PDSQDEIWLV…QLVKHLDYAE (176 aa). Residues 70 to 77, 137 to 139, and 150 to 152 contribute to the substrate site; these read RGGQVTYH, SLG, and GLA. The active-site Acyl-thioester intermediate is Cys-168.

Belongs to the LipB family.

The protein localises to the cytoplasm. It catalyses the reaction octanoyl-[ACP] + L-lysyl-[protein] = N(6)-octanoyl-L-lysyl-[protein] + holo-[ACP] + H(+). It functions in the pathway protein modification; protein lipoylation via endogenous pathway; protein N(6)-(lipoyl)lysine from octanoyl-[acyl-carrier-protein]: step 1/2. Functionally, catalyzes the transfer of endogenously produced octanoic acid from octanoyl-acyl-carrier-protein onto the lipoyl domains of lipoate-dependent enzymes. Lipoyl-ACP can also act as a substrate although octanoyl-ACP is likely to be the physiological substrate. The sequence is that of Octanoyltransferase from Pseudomonas putida (strain GB-1).